Reading from the N-terminus, the 479-residue chain is Ribulose bisphosphate carboxylase large chain 2 (479 aa).

Substrate contacts are provided by N116 and T166. The Proton acceptor role is filled by K168. K170 serves as a coordination point for substrate. The Mg(2+) site is built by K194, D196, and E197. At K194 the chain carries N6-carboxylysine. H287 functions as the Proton acceptor in the catalytic mechanism. Residues R288, H320, and S372 each coordinate substrate.

This sequence belongs to the RuBisCO large chain family. Type I subfamily. As to quaternary structure, heterohexadecamer of 8 large chains and 8 small chains. The cofactor is Mg(2+).

The enzyme catalyses 2 (2R)-3-phosphoglycerate + 2 H(+) = D-ribulose 1,5-bisphosphate + CO2 + H2O. It carries out the reaction D-ribulose 1,5-bisphosphate + O2 = 2-phosphoglycolate + (2R)-3-phosphoglycerate + 2 H(+). In terms of biological role, ruBisCO catalyzes two reactions: the carboxylation of D-ribulose 1,5-bisphosphate, the primary event in carbon dioxide fixation, as well as the oxidative fragmentation of the pentose substrate. Both reactions occur simultaneously and in competition at the same active site. The polypeptide is Ribulose bisphosphate carboxylase large chain 2 (Bradyrhizobium sp. (strain ORS 278)).